We begin with the raw amino-acid sequence, 316 residues long: DNA-directed RNA polymerase subunit alpha (316 aa).

An alpha N-terminal domain (alpha-NTD) region spans residues 1 to 232 (MSGNDLFPST…DLFNPLHHCS (232 aa)). Residues 247–316 (KINDILVEEL…LNIYLPKEKY (70 aa)) are alpha C-terminal domain (alpha-CTD).

Belongs to the RNA polymerase alpha chain family. As to quaternary structure, in plastids the minimal PEP RNA polymerase catalytic core is composed of four subunits: alpha, beta, beta', and beta''. When a (nuclear-encoded) sigma factor is associated with the core the holoenzyme is formed, which can initiate transcription.

The protein resides in the plastid. The protein localises to the chloroplast. It carries out the reaction RNA(n) + a ribonucleoside 5'-triphosphate = RNA(n+1) + diphosphate. Functionally, DNA-dependent RNA polymerase catalyzes the transcription of DNA into RNA using the four ribonucleoside triphosphates as substrates. This chain is DNA-directed RNA polymerase subunit alpha, found in Mesostigma viride (Green alga).